We begin with the raw amino-acid sequence, 315 residues long: Acetyl-coenzyme A carboxylase carboxyl transferase subunit alpha (315 aa).

A CoA carboxyltransferase C-terminal domain is found at 32 to 289 (EIDMLEASLE…KEAFTKQLSE (258 aa)).

This sequence belongs to the AccA family. As to quaternary structure, acetyl-CoA carboxylase is a heterohexamer composed of biotin carboxyl carrier protein (AccB), biotin carboxylase (AccC) and two subunits each of ACCase subunit alpha (AccA) and ACCase subunit beta (AccD).

It is found in the cytoplasm. The catalysed reaction is N(6)-carboxybiotinyl-L-lysyl-[protein] + acetyl-CoA = N(6)-biotinyl-L-lysyl-[protein] + malonyl-CoA. It participates in lipid metabolism; malonyl-CoA biosynthesis; malonyl-CoA from acetyl-CoA: step 1/1. Its function is as follows. Component of the acetyl coenzyme A carboxylase (ACC) complex. First, biotin carboxylase catalyzes the carboxylation of biotin on its carrier protein (BCCP) and then the CO(2) group is transferred by the carboxyltransferase to acetyl-CoA to form malonyl-CoA. This is Acetyl-coenzyme A carboxylase carboxyl transferase subunit alpha from Staphylococcus carnosus (strain TM300).